Here is a 204-residue protein sequence, read N- to C-terminus: Thiamine-phosphate synthase (204 aa).

Residues 32-36 and Asp64 each bind 4-amino-2-methyl-5-(diphosphooxymethyl)pyrimidine; that span reads QLRMK. Asp65 and Asp84 together coordinate Mg(2+). A 4-amino-2-methyl-5-(diphosphooxymethyl)pyrimidine-binding site is contributed by Thr103. 129 to 131 contacts 2-[(2R,5Z)-2-carboxy-4-methylthiazol-5(2H)-ylidene]ethyl phosphate; that stretch reads TTT. Lys132 is a 4-amino-2-methyl-5-(diphosphooxymethyl)pyrimidine binding site. Residue Gly165 coordinates 2-[(2R,5Z)-2-carboxy-4-methylthiazol-5(2H)-ylidene]ethyl phosphate.

It belongs to the thiamine-phosphate synthase family. It depends on Mg(2+) as a cofactor.

The enzyme catalyses 2-[(2R,5Z)-2-carboxy-4-methylthiazol-5(2H)-ylidene]ethyl phosphate + 4-amino-2-methyl-5-(diphosphooxymethyl)pyrimidine + 2 H(+) = thiamine phosphate + CO2 + diphosphate. It catalyses the reaction 2-(2-carboxy-4-methylthiazol-5-yl)ethyl phosphate + 4-amino-2-methyl-5-(diphosphooxymethyl)pyrimidine + 2 H(+) = thiamine phosphate + CO2 + diphosphate. It carries out the reaction 4-methyl-5-(2-phosphooxyethyl)-thiazole + 4-amino-2-methyl-5-(diphosphooxymethyl)pyrimidine + H(+) = thiamine phosphate + diphosphate. It participates in cofactor biosynthesis; thiamine diphosphate biosynthesis; thiamine phosphate from 4-amino-2-methyl-5-diphosphomethylpyrimidine and 4-methyl-5-(2-phosphoethyl)-thiazole: step 1/1. In terms of biological role, condenses 4-methyl-5-(beta-hydroxyethyl)thiazole monophosphate (THZ-P) and 2-methyl-4-amino-5-hydroxymethyl pyrimidine pyrophosphate (HMP-PP) to form thiamine monophosphate (TMP). The chain is Thiamine-phosphate synthase from Bacteroides fragilis (strain YCH46).